Consider the following 156-residue polypeptide: 6,7-dimethyl-8-ribityllumazine synthase (156 aa).

Residues phenylalanine 23, 57-59 (SFE), and 81-83 (AVI) contribute to the 5-amino-6-(D-ribitylamino)uracil site. 86–87 (GT) is a (2S)-2-hydroxy-3-oxobutyl phosphate binding site. Histidine 89 (proton donor) is an active-site residue. Tyrosine 114 is a 5-amino-6-(D-ribitylamino)uracil binding site. Arginine 128 contacts (2S)-2-hydroxy-3-oxobutyl phosphate.

It belongs to the DMRL synthase family. In terms of assembly, forms an icosahedral capsid composed of 60 subunits, arranged as a dodecamer of pentamers.

It carries out the reaction (2S)-2-hydroxy-3-oxobutyl phosphate + 5-amino-6-(D-ribitylamino)uracil = 6,7-dimethyl-8-(1-D-ribityl)lumazine + phosphate + 2 H2O + H(+). It participates in cofactor biosynthesis; riboflavin biosynthesis; riboflavin from 2-hydroxy-3-oxobutyl phosphate and 5-amino-6-(D-ribitylamino)uracil: step 1/2. Its function is as follows. Catalyzes the formation of 6,7-dimethyl-8-ribityllumazine by condensation of 5-amino-6-(D-ribitylamino)uracil with 3,4-dihydroxy-2-butanone 4-phosphate. This is the penultimate step in the biosynthesis of riboflavin. The chain is 6,7-dimethyl-8-ribityllumazine synthase from Halorhodospira halophila (strain DSM 244 / SL1) (Ectothiorhodospira halophila (strain DSM 244 / SL1)).